Here is a 924-residue protein sequence, read N- to C-terminus: Protein argonaute 4 (924 aa).

Disordered stretches follow at residues Met1–Val37 and Thr159–Asn185. Residues Leu26–Val37 are compositionally biased toward pro residues. Low complexity predominate over residues Asn162 to Pro173. A PAZ domain is found at Pro292 to Pro408. The Piwi domain occupies Phe577–Lys885. Positions Asp584–Tyr591 match the Nuclear localization signal motif.

The protein belongs to the argonaute family. Ago subfamily. As to quaternary structure, interacts with NRPE1 (via C-terminus). Binding to NRPE1 is required for its function in RdDM. Interacts with turnip crinkle virus (TCV) capsid protein P38; this interaction inhibits probably RNA silencing ability of AGO4. Interacts with SDE3. Binds to RDM3. Binds chromatin at loci subject to transcriptional silencing. Interacts with MBD6. Expressed in embryos, mature leaves, vascular tissue of the sepals, stamens and stigma, at the tip of the style and siliques.

Its subcellular location is the nucleus. The protein resides in the nucleolus. It localises to the nucleoplasm. The protein localises to the cajal body. In terms of biological role, together with RDM3, required for transcriptional gene silencing (TGS) by DNA methylation and repressive histone modifications (H3K9me2) of several chromatin loci. Component of the RISC complex that associate with the small interfering RNA (siRNA) pathway involved in direct cytosine methylation at endogenous DNA repeats. Forms a AGO4/NRPE1/siRNA complex in cajal body, facilitating its function in RNA-directed gene silencing of target loci. Required for CpNpG and asymmetric DNA methylation as well as histone H3 'Lys-9' methylation (H3K9me) at SUP and SN1 loci. May be not required for CpG methylation. Required for the production and maintenance of retrotransposon SN1 and Copia and ribosomal 5S 25 nucleotide siRNAs specialized in gene silencing at chromatin level. Involved in de novo methylation of FWA gene and required for the maintenance of RNA-directed DNA methylation (RdDM) triggered by inverted repeat transgenes. Interacts with miRNA miR390 and miR172, targeting respectively TAS3 and AP2 mRNAs, and mediates cleavage of miRNA targets. Associates mainly with small RNAs of 24 nucleotide in length and preferentially recruits small RNAs with a 5' terminal adenosine. Targeted by the turnip yellows virus (TuYV) protein P0 (via F-box-like domain) for probable proteasome degradation and thereby inactivating AGO4 function in RNA silencing. Required for resistance to the bacterial pathogen P.syringae. Works independently of the RdDM pathway in mediating resistance to P.syringae. RdDM is involved in viral genome methylation as an epigenetic defense against geminiviruses. This chain is Protein argonaute 4, found in Arabidopsis thaliana (Mouse-ear cress).